A 518-amino-acid chain; its full sequence is D-aminopeptidase (518 aa).

The active-site Nucleophile is the Ser62. Catalysis depends on Lys65, which acts as the Proton donor/acceptor. Positions 477-487 (QRSMDAPSPGE) are important for specificity. Residue Asp481 participates in substrate binding.

The protein belongs to the peptidase S12 family. In terms of assembly, homodimer.

The catalysed reaction is Release of an N-terminal D-amino acid from a peptide, Xaa-|-Yaa-, in which Xaa is preferably D-Ala, D-Ser or D-Thr. D-amino acid amides and methyl esters also are hydrolyzed, as is glycine amide.. Inhibited by beta-lactam compounds such as 6-aminopenicillic acid, 7-aminocephalosporanic acid, benzylpenicillin and ampicillin. Inhibited by p-chloromercuribenzoate. Hydrolyzes N-terminal residues in D-amino acid-containing peptides. The protein is D-aminopeptidase of Brucella abortus (strain S19).